The chain runs to 418 residues: MSKVEFNKETGPREVFCGLTSIVWLHRRMPDAFFLVVGSRTCAHLIQSAAGVMIFAEPRFGTAILEEKDLAGLADAHEELDRVVNDLIARRPEIKTLFLVGSCPSEVIKLDLATVAEKLNKRFLGQVRFVNYSGSGIETTFTQGEDGALKALIPLMESSNEEKLLLVGTLANNVEDRFKKIFKNLGISNIESFPPRQSTELPKIGKNTKVLLTQPYLSDTVRDLKHRGCEIISAPFPLGIEGSTEWFLAAAKAFKINELKVHEILSPLINRAKLALESHKEILKGKRLFLLPESQLEISLARFLHNECEMDLVEVGTPYLNKDLMKEEINLLPDNTKIVEGQHVEKQLDRVRESNPDLVVCGMGLANPLEAEGISTKWSIEMVFSPIHGIDQAADLAGLFSKPLRRNQILTTKTLVTH.

[4Fe-4S] cluster contacts are provided by cysteine 17, cysteine 42, and cysteine 103.

This sequence belongs to the BchN/ChlN family. Protochlorophyllide reductase is composed of three subunits; ChlL, ChlN and ChlB. Forms a heterotetramer of two ChlB and two ChlN subunits. Requires [4Fe-4S] cluster as cofactor.

The catalysed reaction is chlorophyllide a + oxidized 2[4Fe-4S]-[ferredoxin] + 2 ADP + 2 phosphate = protochlorophyllide a + reduced 2[4Fe-4S]-[ferredoxin] + 2 ATP + 2 H2O. The protein operates within porphyrin-containing compound metabolism; chlorophyll biosynthesis (light-independent). Its function is as follows. Component of the dark-operative protochlorophyllide reductase (DPOR) that uses Mg-ATP and reduced ferredoxin to reduce ring D of protochlorophyllide (Pchlide) to form chlorophyllide a (Chlide). This reaction is light-independent. The NB-protein (ChlN-ChlB) is the catalytic component of the complex. The sequence is that of Light-independent protochlorophyllide reductase subunit N from Prochlorococcus marinus (strain AS9601).